We begin with the raw amino-acid sequence, 399 residues long: Forkhead box protein A4-A (399 aa).

Residues 119–213 (KPPYSYISLI…ENGCYLRRQK (95 aa)) constitute a DNA-binding region (fork-head). A compositionally biased stretch (basic and acidic residues) spans 219-234 (RSKSGEGEKKVNKPGE). Residues 219–290 (RSKSGEGEKK…VGLSPTSEQA (72 aa)) form a disordered region. Positions 267-277 (STGSSIHQACG) are enriched in polar residues.

In terms of tissue distribution, during stages 8.5 to 10, expressed in the part of the dorsal mesoderm invaginating the dorsal blastopore lip (Spemann organizer), as a direct response to dorsal mesodermal induction. At stage 12 (mid-gastrulation), restricted to the dorsal midline in the deeper layers of mesodermal cells. Continuously present in the posterior portion of invaginated mesoderm and expressed within the notochord. Also present in the midline of the neural plate during gastrulation, but absent from the notoplate in exogastrula embryos. Expression in the notochord continues in neurula-stage embryos and at stage 20 in addition to the notochord, expression is seen in the pharyngeal endoderm.

The protein localises to the nucleus. Its function is as follows. Transcriptional repressor involved in embryonic nervous system development. Plays a role in the induction and patterning of the anterior-posterior neural axis. Involved in the establishment of floor plate differentiation from neural plate cells during gastrulation. Binds the anf1 promoter sequence to restrict expression of anf1 to the anterior of the neural plate, thereby patterning the forebrain. Can bind to the HNF-3-alpha DNA target sequence. Cooperates with t/bra in a dose-dependent manner to specify dorsal mesoderm formation, including notochord. Binds to DNA via the target sequence 5'-[GA]TAAA[TC]A-3', with 5'-GTAAATA-3' being the preferred binding site. In Xenopus laevis (African clawed frog), this protein is Forkhead box protein A4-A (foxa4-a).